The following is a 423-amino-acid chain: Tyrosine--tRNA ligase (423 aa).

Y35 is an L-tyrosine binding site. Residues 40-49 (PTAPSLHAGH) carry the 'HIGH' region motif. L-tyrosine contacts are provided by Y170 and Q174. The short motif at 230–234 (KFGKS) is the 'KMSKS' region element. K233 contacts ATP. An S4 RNA-binding domain is found at 355–412 (DLITDLLVATGLSASKGAARRTIAEGGVSVNNVKIDSDEWTPQASDFLHGRWLVLRRG).

The protein belongs to the class-I aminoacyl-tRNA synthetase family. TyrS type 1 subfamily. As to quaternary structure, homodimer.

It is found in the cytoplasm. It catalyses the reaction tRNA(Tyr) + L-tyrosine + ATP = L-tyrosyl-tRNA(Tyr) + AMP + diphosphate + H(+). Catalyzes the attachment of tyrosine to tRNA(Tyr) in a two-step reaction: tyrosine is first activated by ATP to form Tyr-AMP and then transferred to the acceptor end of tRNA(Tyr). The sequence is that of Tyrosine--tRNA ligase from Mycobacterium sp. (strain JLS).